Consider the following 235-residue polypeptide: Ribosomal RNA small subunit methyltransferase G (235 aa).

S-adenosyl-L-methionine is bound by residues G74, F79, 97 to 99 (EAT), 125 to 126 (AE), and R144.

This sequence belongs to the methyltransferase superfamily. RNA methyltransferase RsmG family.

The protein resides in the cytoplasm. In terms of biological role, specifically methylates the N7 position of a guanine in 16S rRNA. The protein is Ribosomal RNA small subunit methyltransferase G of Dehalococcoides mccartyi (strain CBDB1).